The sequence spans 395 residues: Putative gustatory receptor 58a (395 aa).

Residues 1-32 (MLLKFMYIYGIGCGLMPAPLKKGQFLLGYKQR) are Cytoplasmic-facing. A helical membrane pass occupies residues 33–53 (WYLIYTACLHGGLLTVLPFTF). Over 54–72 (PHYMYDDSYMSSNPVLKWT) the chain is Extracellular. Residues 73–93 (FNLTNITRIMAMFSGVLLMWF) traverse the membrane as a helical segment. The Cytoplasmic segment spans residues 94-131 (RRKRILNLGENLILHCLKCKTLDNRSKKYSKLRKRVRN). The helical transmembrane segment at 132 to 152 (VLFQMLLVANLSILLGALILF) threads the bilayer. The Extracellular portion of the chain corresponds to 153–169 (RIHSVQRISKTAMIVAH). A helical transmembrane segment spans residues 170–190 (ITQFIYVVFMMTGICVILLVL). Topologically, residues 191–250 (HWQSERLQIALKDLCSFLNHEERNSLTLSENKANRSLGKLAKLFKLFAENQRLVREVFRT) are cytoplasmic. Residues 251–271 (FDLPIALLLLKMFVTNVNLVY) traverse the membrane as a helical segment. Topologically, residues 272-288 (HGVQFGNDTIETSSYTR) are extracellular. N-linked (GlcNAc...) asparagine glycosylation occurs at Asn-278. The helical transmembrane segment at 289–309 (IVGQWVVISHYWSAVLLMNVV) threads the bilayer. The Cytoplasmic portion of the chain corresponds to 310-366 (DDVTRRSDLKMGDLLREFSHLELVKRDFHLQLELFSDHLRCHPSTYKVCGLFIFNKQ). A helical transmembrane segment spans residues 367–387 (TSLAYFFYVLVQVLVLVQFDL). The Extracellular portion of the chain corresponds to 388–395 (KNKVEKRN).

This sequence belongs to the insect chemoreceptor superfamily. Gustatory receptor (GR) family. Gr22e subfamily. As to expression, expressed in the adult labellar chemosensory neurons.

The protein localises to the cell membrane. Functionally, probable gustatory receptor which mediates acceptance or avoidance behavior, depending on its substrates. The polypeptide is Putative gustatory receptor 58a (Gr58a) (Drosophila melanogaster (Fruit fly)).